Consider the following 377-residue polypeptide: Formate dehydrogenase, mitochondrial (377 aa).

Residues Met-1–Lys-29 constitute a mitochondrion transit peptide. Substrate-binding residues include Ile-121 and Asn-145. NAD(+)-binding positions include Thr-146, Asp-220, Pro-255–Lys-259, Asn-281, Asp-307, and His-331–Gly-334.

Belongs to the D-isomer specific 2-hydroxyacid dehydrogenase family. FDH subfamily. As to quaternary structure, homodimer.

The protein localises to the mitochondrion. It catalyses the reaction formate + NAD(+) = CO2 + NADH. In terms of biological role, catalyzes the NAD(+)-dependent oxidation of formate to carbon dioxide. Involved in the cell stress response. In Hordeum vulgare (Barley), this protein is Formate dehydrogenase, mitochondrial.